Here is a 738-residue protein sequence, read N- to C-terminus: 1,4-alpha-glucan branching enzyme GlgB (738 aa).

Residue aspartate 417 is the Nucleophile of the active site. Glutamate 472 acts as the Proton donor in catalysis.

The protein belongs to the glycosyl hydrolase 13 family. GlgB subfamily. As to quaternary structure, monomer.

It carries out the reaction Transfers a segment of a (1-&gt;4)-alpha-D-glucan chain to a primary hydroxy group in a similar glucan chain.. The protein operates within glycan biosynthesis; glycogen biosynthesis. Its function is as follows. Catalyzes the formation of the alpha-1,6-glucosidic linkages in glycogen by scission of a 1,4-alpha-linked oligosaccharide from growing alpha-1,4-glucan chains and the subsequent attachment of the oligosaccharide to the alpha-1,6 position. This Burkholderia pseudomallei (strain K96243) protein is 1,4-alpha-glucan branching enzyme GlgB.